Consider the following 408-residue polypeptide: Argininosuccinate synthase (408 aa).

ATP-binding positions include 10-18 (AYSGGLDTS) and Ala-37. L-citrulline is bound by residues Tyr-90 and Ser-95. ATP is bound at residue Gly-120. The L-aspartate site is built by Thr-122, Asn-126, and Asp-127. Asn-126 contributes to the L-citrulline binding site. Positions 130, 181, 190, 266, and 278 each coordinate L-citrulline.

This sequence belongs to the argininosuccinate synthase family. Type 1 subfamily. Homotetramer.

The protein resides in the cytoplasm. It carries out the reaction L-citrulline + L-aspartate + ATP = 2-(N(omega)-L-arginino)succinate + AMP + diphosphate + H(+). The protein operates within amino-acid biosynthesis; L-arginine biosynthesis; L-arginine from L-ornithine and carbamoyl phosphate: step 2/3. The polypeptide is Argininosuccinate synthase (Cereibacter sphaeroides (strain ATCC 17029 / ATH 2.4.9) (Rhodobacter sphaeroides)).